The sequence spans 266 residues: UPF0328 protein ECU05_1610/ECU11_0120 (266 aa).

The protein belongs to the UPF0328 family.

In Encephalitozoon cuniculi (strain GB-M1) (Microsporidian parasite), this protein is UPF0328 protein ECU05_1610/ECU11_0120.